We begin with the raw amino-acid sequence, 453 residues long: Cytochrome b-c1 complex subunit 2, mitochondrial (453 aa).

The transit peptide at 1 to 14 (MKLLTRAGSFSRFY) directs the protein to the mitochondrion. 3 positions are modified to N6-acetyllysine: K66, K199, and K250.

It belongs to the peptidase M16 family. UQCRC2/QCR2 subfamily. As to quaternary structure, component of the ubiquinol-cytochrome c oxidoreductase (cytochrome b-c1 complex, complex III, CIII), a multisubunit enzyme composed of 11 subunits. The complex is composed of 3 respiratory subunits cytochrome b, cytochrome c1 and Rieske protein UQCRFS1, 2 core protein subunits UQCRC1/QCR1 and UQCRC2/QCR2, and 6 low-molecular weight protein subunits UQCRH/QCR6, UQCRB/QCR7, UQCRQ/QCR8, UQCR10/QCR9, UQCR11/QCR10 and subunit 9, the cleavage product of Rieske protein UQCRFS1. The complex exists as an obligatory dimer and forms supercomplexes (SCs) in the inner mitochondrial membrane with NADH-ubiquinone oxidoreductase (complex I, CI) and cytochrome c oxidase (complex IV, CIV), resulting in different assemblies (supercomplex SCI(1)III(2)IV(1) and megacomplex MCI(2)III(2)IV(2)). Interacts with RAB5IF. Interacts with STMP1.

It localises to the mitochondrion inner membrane. Functionally, component of the ubiquinol-cytochrome c oxidoreductase, a multisubunit transmembrane complex that is part of the mitochondrial electron transport chain which drives oxidative phosphorylation. The respiratory chain contains 3 multisubunit complexes succinate dehydrogenase (complex II, CII), ubiquinol-cytochrome c oxidoreductase (cytochrome b-c1 complex, complex III, CIII) and cytochrome c oxidase (complex IV, CIV), that cooperate to transfer electrons derived from NADH and succinate to molecular oxygen, creating an electrochemical gradient over the inner membrane that drives transmembrane transport and the ATP synthase. The cytochrome b-c1 complex catalyzes electron transfer from ubiquinol to cytochrome c, linking this redox reaction to translocation of protons across the mitochondrial inner membrane, with protons being carried across the membrane as hydrogens on the quinol. In the process called Q cycle, 2 protons are consumed from the matrix, 4 protons are released into the intermembrane space and 2 electrons are passed to cytochrome c. The 2 core subunits UQCRC1/QCR1 and UQCRC2/QCR2 are homologous to the 2 mitochondrial-processing peptidase (MPP) subunits beta-MPP and alpha-MPP respectively, and they seem to have preserved their MPP processing properties. May be involved in the in situ processing of UQCRFS1 into the mature Rieske protein and its mitochondrial targeting sequence (MTS)/subunit 9 when incorporated into complex III. This chain is Cytochrome b-c1 complex subunit 2, mitochondrial (UQCRC2), found in Homo sapiens (Human).